We begin with the raw amino-acid sequence, 177 residues long: MNIIQQLEAEQAAKIAAKRTLPEFSPGDTVRVNVRVVEGNRTRVQAYEGVCIARSGGGINESFTVRKISYGEGVERVFPVYSPLVESVDVVRRGKVRRAKLYYLRDRRGKSARIVENTGTRARKLNDAERQAVVEEKARIEAEKVAAAQALAAEKAAAEAAEAKAAEEAKAAEAAAE.

The protein belongs to the bacterial ribosomal protein bL19 family.

Its function is as follows. This protein is located at the 30S-50S ribosomal subunit interface and may play a role in the structure and function of the aminoacyl-tRNA binding site. The sequence is that of Large ribosomal subunit protein bL19 from Rhizobium meliloti (strain 1021) (Ensifer meliloti).